Reading from the N-terminus, the 390-residue chain is Probable tRNA pseudouridine synthase D (390 aa).

The Nucleophile role is filled by Asp93. One can recognise a TRUD domain in the interval 166–353 (HVLNYFGIQR…YGTRRKLITP (188 aa)).

This sequence belongs to the pseudouridine synthase TruD family.

It carries out the reaction uridine(13) in tRNA = pseudouridine(13) in tRNA. In terms of biological role, could be responsible for synthesis of pseudouridine from uracil-13 in transfer RNAs. This is Probable tRNA pseudouridine synthase D from Methanococcus vannielii (strain ATCC 35089 / DSM 1224 / JCM 13029 / OCM 148 / SB).